We begin with the raw amino-acid sequence, 655 residues long: MGIFSIANQHIRFAVKLACAIVLALFIGFHFQLETPRWAVLTAAIVAAGPAFAAGGEPYSGAIRYRGMLRIIGTFIGCIAALIIIISMIRAPLLMILVCCVWVGFCTWISSLVRIENSYAWGLSGYTALIIVITIQTEPLLTPQFALERCSEIVIGIGCAILADLLFSPRSIKQEVDRELDSLLVAQYQLMQLCIKHGDSEEVDNAWGDLVRRTAALEGMRSNLNMESSRWVRANRRLKALNTLSLTLITQSCETYLIQNTRPELITDTFRELFETPVETVQDVHRQLKRMRRVIVWTGERETPVTLYSWVGAATRYLLLKRGVISNTKISATEEEILQGEPVVKVESAERHHAMVNFWRTTLSCILGTLFWLWTGWTSGNGEMVMIAVVTSLAMRLPNPRMVCIDFIYGTLAALPLGLLYFLVIIPNTQQSMLLLCLSLAVLGFFIGIEVQKRRLGSMGALASTINIIVLDNPMTFHFSQFLDSALGQIVGCMLAFIVILLVRDKSKDRTGRVLLNQFVSAAVSAMTTNVVRRKENRLPALYQQLFLLMNKFPGDLPKFRLALTMIIAHQRLRDAPIPVNEDLSVFHRQLRRTADHVISAGSDDKRRRYFGQLLDELDIYQEKLRIWEAPPQVTEPVKRLTGMLHKYQNALTDS.

The Periplasmic portion of the chain corresponds to 1–12 (MGIFSIANQHIR). The helical transmembrane segment at 13–33 (FAVKLACAIVLALFIGFHFQL) threads the bilayer. At 34–37 (ETPR) the chain is on the cytoplasmic side. Residues 38-58 (WAVLTAAIVAAGPAFAAGGEP) form a helical membrane-spanning segment. Residues 59–68 (YSGAIRYRGM) are Periplasmic-facing. A helical transmembrane segment spans residues 69–89 (LRIIGTFIGCIAALIIIISMI). At 90-92 (RAP) the chain is on the cytoplasmic side. The chain crosses the membrane as a helical span at residues 93-113 (LLMILVCCVWVGFCTWISSLV). The Periplasmic segment spans residues 114–120 (RIENSYA). Residues 121 to 141 (WGLSGYTALIIVITIQTEPLL) form a helical membrane-spanning segment. Topologically, residues 142–151 (TPQFALERCS) are cytoplasmic. The chain crosses the membrane as a helical span at residues 152 to 172 (EIVIGIGCAILADLLFSPRSI). Topologically, residues 173-369 (KQEVDRELDS…RTTLSCILGT (197 aa)) are periplasmic. The helical transmembrane segment at 370–390 (LFWLWTGWTSGNGEMVMIAVV) threads the bilayer. Over 391-406 (TSLAMRLPNPRMVCID) the chain is Cytoplasmic. The helical transmembrane segment at 407–427 (FIYGTLAALPLGLLYFLVIIP) threads the bilayer. At 428–430 (NTQ) the chain is on the periplasmic side. A helical transmembrane segment spans residues 431-451 (QSMLLLCLSLAVLGFFIGIEV). Residues 452 to 458 (QKRRLGS) lie on the Cytoplasmic side of the membrane. A helical membrane pass occupies residues 459-479 (MGALASTINIIVLDNPMTFHF). Topologically, residues 480–481 (SQ) are periplasmic. Residues 482 to 502 (FLDSALGQIVGCMLAFIVILL) traverse the membrane as a helical segment. The Cytoplasmic segment spans residues 503–655 (VRDKSKDRTG…HKYQNALTDS (153 aa)).

The protein belongs to the aromatic acid exporter ArAE (TC 2.A.85) family.

Its subcellular location is the cell inner membrane. Its function is as follows. Forms an efflux pump with AaeA. Could function as a metabolic relief valve, allowing to eliminate certain compounds when they accumulate to high levels in the cell. This is p-hydroxybenzoic acid efflux pump subunit AaeB from Salmonella paratyphi A (strain ATCC 9150 / SARB42).